Here is a 301-residue protein sequence, read N- to C-terminus: Troponin T, cardiac muscle (301 aa).

Composition is skewed to acidic residues over residues 1 to 42 and 50 to 74; these read MSDL…EEEA and AETE…DGPV. Disordered stretches follow at residues 1–99 and 125–223; these read MSDL…GERV and ENRK…KKKK. Serine 2 carries the post-translational modification N-acetylserine. A Phosphoserine; by CK2 modification is found at serine 2. A compositionally biased stretch (pro residues) spans 82–93; the sequence is RPFMPNLVPPKI. 2 stretches are compositionally biased toward basic and acidic residues: residues 125-186 and 206-223; these read ENRK…DEAR and QTER…KKKK. Threonine 207 carries the post-translational modification Phosphothreonine; by PKC/PRKCA. At serine 211 the chain carries Phosphoserine; by PKC/PRKCA. The residue at position 216 (threonine 216) is a Phosphothreonine; by PKC/PRKCA and RAF1. A Phosphothreonine; by PKC/PRKCA modification is found at threonine 297.

It belongs to the troponin T family. In terms of assembly, binds with troponins I and C to make the thin-filament regulatory complex, troponin. Phosphorylation at Thr-216 by PRKCA induces significant reduction in myofilament calcium sensitivity and actomyosin ATPase activity. In terms of tissue distribution, the major isoform in adult heart is CTNT4.

Troponin T is the tropomyosin-binding subunit of troponin, the thin filament regulatory complex which confers calcium-sensitivity to striated muscle actomyosin ATPase activity. The sequence is that of Troponin T, cardiac muscle (TNNT2) from Oryctolagus cuniculus (Rabbit).